A 217-amino-acid chain; its full sequence is MKENTLIVRQLGRQRYLPIWQKMQDFTDTRDDDSADEIWLVEHESVFTQGQAGKDEHLLAPGDIEVIKVDRGGQVTYHGPGQQMMYVLFNLRRLKIGVRELVTWLEECIIESLAEYDIQAYAKADAPGVYVNDSKIASLGLRVRRGCSFHGLALNVNMDLSPFLRINPCGYAGMNMVQTKELKGPQNLETAGAGLVKHMIKKLNATQVKHTEGFENE.

The BPL/LPL catalytic domain maps to 32–207 (DDSADEIWLV…HMIKKLNATQ (176 aa)). Residues 71 to 78 (RGGQVTYH), 138 to 140 (SLG), and 151 to 153 (GLA) contribute to the substrate site. Catalysis depends on C169, which acts as the Acyl-thioester intermediate.

The protein belongs to the LipB family.

The protein resides in the cytoplasm. It catalyses the reaction octanoyl-[ACP] + L-lysyl-[protein] = N(6)-octanoyl-L-lysyl-[protein] + holo-[ACP] + H(+). Its pathway is protein modification; protein lipoylation via endogenous pathway; protein N(6)-(lipoyl)lysine from octanoyl-[acyl-carrier-protein]: step 1/2. Functionally, catalyzes the transfer of endogenously produced octanoic acid from octanoyl-acyl-carrier-protein onto the lipoyl domains of lipoate-dependent enzymes. Lipoyl-ACP can also act as a substrate although octanoyl-ACP is likely to be the physiological substrate. The chain is Octanoyltransferase from Pseudoalteromonas translucida (strain TAC 125).